Here is a 922-residue protein sequence, read N- to C-terminus: NEDD4-like E3 ubiquitin-protein ligase WWP1 (922 aa).

Residues 1–116 (MATASPRSDT…IHNRKLERVK (116 aa)) form the C2 domain. Composition is skewed to polar residues over residues 210–219 (GDNTPSSPSQ), 243–278 (NGES…STTV), 286–302 (ILTS…TSAE), 314–323 (DTSNSRSSSA), and 340–351 (RQQSGNANTETL). Residues 210–388 (GDNTPSSPSQ…RPQPLPPGWE (179 aa)) are disordered. 4 consecutive WW domains span residues 349–382 (ETLP…RPQP), 381–414 (QPLP…RPTM), 456–489 (GPLP…DPRT), and 496–529 (EPLP…DPRN). Residues 349 to 531 (ETLPSGWEQR…TTFKDPRNGK (183 aa)) are required for interaction with and ubiquitination of AMOTL2. Required for interaction with YAP1. The 335-residue stretch at 588-922 (KPYDLRRRLY…IEETEGFGQE (335 aa)) folds into the HECT domain. C890 acts as the Glycyl thioester intermediate in catalysis.

In terms of assembly, interacts with the Crumbs complex components PALS1 and PATJ; interaction with the Crumbs complex is enhanced by WWP1's interaction with AMOTL2 and facilitates WWP1 localization to the plasma membrane. Interaction with the Crumbs complex promotes WWP1 monoubiquitination of AMOTL2, which activates the Hippo signaling pathway. Binds KLF2 and HIVEP3. Binds SCNN1A, SCNN1B, SCNN1G, WBP1, WBP2, DRPLA and adenovirus type 2 PIII. Interacts with RNF11. Interacts with SPART. Interacts with ERBB4 isoforms JM-B CYT-1 and JM-A CYT-1. Interacts with SMAD1, SMAD2, SMAD3, SMAD5, SMAD6, SMAD7, TGFBR1 and TGFBR2. Associates with the TGFBR1:TGFBR2 receptor complex in presence of SMAD7. Interacts with SKIL isoform 1. Interacts with TP63 isoform 1 and isoform 2. Interacts with STAMBP and RNF11. Interacts with NDFIP1 and NDFIP2; this interaction activates the E3 ubiquitin-protein ligase. Interacts with TGIF. Interacts (via WW domains) with ARRDC1, ARRDC2 and ARRDC3. (Microbial infection) Interacts with HTLV-1 protein Gag. As to quaternary structure, (Microbial infection) Interacts with ebola virus protein VP40. Post-translationally, auto-ubiquitinated and ubiquitinated by RNF11. In terms of tissue distribution, detected in heart, placenta, pancreas, kidney, liver, skeletal muscle, bone marrow, fetal brain, and at much lower levels in adult brain and lung. Isoform 1 and isoform 5 predominate in all tissues tested, except in testis and bone marrow, where isoform 5 is expressed at much higher levels than isoform 1.

Its subcellular location is the cytoplasm. It localises to the cell membrane. The protein resides in the nucleus. The protein localises to the cell junction. The enzyme catalyses S-ubiquitinyl-[E2 ubiquitin-conjugating enzyme]-L-cysteine + [acceptor protein]-L-lysine = [E2 ubiquitin-conjugating enzyme]-L-cysteine + N(6)-ubiquitinyl-[acceptor protein]-L-lysine.. Its pathway is protein modification; protein ubiquitination. Its activity is regulated as follows. Activated by NDFIP1- and NDFIP2-binding. Functionally, E3 ubiquitin-protein ligase which accepts ubiquitin from an E2 ubiquitin-conjugating enzyme in the form of a thioester and then directly transfers the ubiquitin to targeted substrates. Ubiquitinates ERBB4 isoforms JM-A CYT-1 and JM-B CYT-1, KLF2, KLF5 and TP63 and promotes their proteasomal degradation. Ubiquitinates RNF11 without targeting it for degradation. Ubiquitinates and promotes degradation of TGFBR1; the ubiquitination is enhanced by SMAD7. Ubiquitinates SMAD6 and SMAD7. Ubiquitinates and promotes degradation of SMAD2 in response to TGF-beta signaling, which requires interaction with TGIF. Activates the Hippo signaling pathway in response to cell contact inhibition and recruitment to the Crumbs complex at the cell membrane. Monoubiquitinates AMOTL2 which facilitates its interaction with and activation of LATS2. LATS2 then phosphorylates YAP1, excluding it from the nucleus and therefore ultimately represses YAP1-driven transcription of target genes. The polypeptide is NEDD4-like E3 ubiquitin-protein ligase WWP1 (WWP1) (Homo sapiens (Human)).